Here is a 315-residue protein sequence, read N- to C-terminus: Ribosomal RNA small subunit methyltransferase H (315 aa).

S-adenosyl-L-methionine contacts are provided by residues 33–35 (GGH), aspartate 52, phenylalanine 84, aspartate 106, and glutamine 113. The segment at 295 to 315 (SDELEENNRSHSAKLRVAEKL) is disordered.

The protein belongs to the methyltransferase superfamily. RsmH family.

It localises to the cytoplasm. The catalysed reaction is cytidine(1402) in 16S rRNA + S-adenosyl-L-methionine = N(4)-methylcytidine(1402) in 16S rRNA + S-adenosyl-L-homocysteine + H(+). Specifically methylates the N4 position of cytidine in position 1402 (C1402) of 16S rRNA. This Lactobacillus gasseri (strain ATCC 33323 / DSM 20243 / BCRC 14619 / CIP 102991 / JCM 1131 / KCTC 3163 / NCIMB 11718 / NCTC 13722 / AM63) protein is Ribosomal RNA small subunit methyltransferase H.